A 496-amino-acid chain; its full sequence is Probable E3 ubiquitin-protein ligase XBOS32 (496 aa).

ANK repeat units lie at residues 50-79 (GRNS…EINL), 83-112 (RGQT…NVHR), 117-147 (NGGS…SMPN), 180-209 (GGLT…SVIE), and 223-252 (AGST…SLSA). Residues 321–368 (CAVCLEGSCSVAAEGCKHEFCTRCALYLCSTSYTSVSPAGAIPCPLCR) form an RING-type zinc finger.

It carries out the reaction S-ubiquitinyl-[E2 ubiquitin-conjugating enzyme]-L-cysteine + [acceptor protein]-L-lysine = [E2 ubiquitin-conjugating enzyme]-L-cysteine + N(6)-ubiquitinyl-[acceptor protein]-L-lysine.. Its pathway is protein modification; protein ubiquitination. The protein is Probable E3 ubiquitin-protein ligase XBOS32 (XBOS32) of Oryza sativa subsp. japonica (Rice).